The chain runs to 479 residues: Aspartyl/glutamyl-tRNA(Asn/Gln) amidotransferase subunit B (479 aa).

It belongs to the GatB/GatE family. GatB subfamily. As to quaternary structure, heterotrimer of A, B and C subunits.

It carries out the reaction L-glutamyl-tRNA(Gln) + L-glutamine + ATP + H2O = L-glutaminyl-tRNA(Gln) + L-glutamate + ADP + phosphate + H(+). The enzyme catalyses L-aspartyl-tRNA(Asn) + L-glutamine + ATP + H2O = L-asparaginyl-tRNA(Asn) + L-glutamate + ADP + phosphate + 2 H(+). Functionally, allows the formation of correctly charged Asn-tRNA(Asn) or Gln-tRNA(Gln) through the transamidation of misacylated Asp-tRNA(Asn) or Glu-tRNA(Gln) in organisms which lack either or both of asparaginyl-tRNA or glutaminyl-tRNA synthetases. The reaction takes place in the presence of glutamine and ATP through an activated phospho-Asp-tRNA(Asn) or phospho-Glu-tRNA(Gln). The polypeptide is Aspartyl/glutamyl-tRNA(Asn/Gln) amidotransferase subunit B (Mesoplasma florum (strain ATCC 33453 / NBRC 100688 / NCTC 11704 / L1) (Acholeplasma florum)).